We begin with the raw amino-acid sequence, 569 residues long: BICD family-like cargo adapter 1 (569 aa).

Residues 1-36 (MSASCLDLISAPPQPDSDRMDRALNPGRQNSPDTAG) form a disordered region. The short motif at 97–101 (AAKLG) is the CC1 box element. Positions 102–283 (KALLERNQDL…TLELEKHCHH (182 aa)) form a coiled coil. The tract at residues 385-405 (ALSTDSSMDESSETLSAKDVP) is disordered. Residues 458–520 (NEQLQSAIRD…LEAWQDDMHR (63 aa)) adopt a coiled-coil conformation. The segment at 533 to 554 (EWKDPPFSFSRRGAAASRPTQR) is disordered.

It belongs to the BICDR family. Part of a tripartite complex with dynein and dynactin, acts an adapter linking the dynein motor complex and dynactin. In terms of tissue distribution, highly expressed in developing neural tissues and developing eye.

It is found in the cytoplasm. The protein resides in the cytoskeleton. Its subcellular location is the microtubule organizing center. It localises to the centrosome. Functionally, acts as an adapter protein linking the dynein motor complex to various cargos and converts dynein from a non-processive to a highly processive motor in the presence of dynactin. Facilitates the interaction between dynein and dynactin and activates dynein processivity (the ability to move along a microtubule for a long distance without falling off the track). Predominantly recruits 2 dyneins, which increases both the force and speed of the microtubule motor. Component of secretory vesicle machinery in developing neurons that acts as a regulator of neurite outgrowth. Regulates the secretory vesicle transport by controlling the accumulation of Rab6-containing secretory vesicles in the pericentrosomal region restricting anterograde secretory transport during the early phase of neuronal differentiation, thereby inhibiting neuritogenesis. In Danio rerio (Zebrafish), this protein is BICD family-like cargo adapter 1 (bicdl1).